The sequence spans 213 residues: Deoxyribose-phosphate aldolase (213 aa).

The active-site Proton donor/acceptor is the Asp89. Catalysis depends on Lys151, which acts as the Schiff-base intermediate with acetaldehyde. Lys180 (proton donor/acceptor) is an active-site residue.

It belongs to the DeoC/FbaB aldolase family. DeoC type 1 subfamily.

Its subcellular location is the cytoplasm. The enzyme catalyses 2-deoxy-D-ribose 5-phosphate = D-glyceraldehyde 3-phosphate + acetaldehyde. It participates in carbohydrate degradation; 2-deoxy-D-ribose 1-phosphate degradation; D-glyceraldehyde 3-phosphate and acetaldehyde from 2-deoxy-alpha-D-ribose 1-phosphate: step 2/2. Its function is as follows. Catalyzes a reversible aldol reaction between acetaldehyde and D-glyceraldehyde 3-phosphate to generate 2-deoxy-D-ribose 5-phosphate. In Finegoldia magna (strain ATCC 29328 / DSM 20472 / WAL 2508) (Peptostreptococcus magnus), this protein is Deoxyribose-phosphate aldolase.